Consider the following 357-residue polypeptide: Phosphate acyltransferase (357 aa).

Belongs to the PlsX family. Homodimer. Probably interacts with PlsY.

The protein localises to the cytoplasm. It carries out the reaction a fatty acyl-[ACP] + phosphate = an acyl phosphate + holo-[ACP]. The protein operates within lipid metabolism; phospholipid metabolism. Catalyzes the reversible formation of acyl-phosphate (acyl-PO(4)) from acyl-[acyl-carrier-protein] (acyl-ACP). This enzyme utilizes acyl-ACP as fatty acyl donor, but not acyl-CoA. The chain is Phosphate acyltransferase from Herminiimonas arsenicoxydans.